We begin with the raw amino-acid sequence, 398 residues long: Elongation factor Tu (398 aa).

One can recognise a tr-type G domain in the interval 10 to 207 (KPHVNIGTIG…TVDSYIPEPE (198 aa)). Positions 19-26 (GHVDHGKT) are G1. Residue 19-26 (GHVDHGKT) participates in GTP binding. Threonine 26 provides a ligand contact to Mg(2+). The G2 stretch occupies residues 63–67 (GITIN). A G3 region spans residues 84-87 (DAPG). GTP-binding positions include 84 to 88 (DAPGH) and 139 to 142 (NKVD). Residues 139–142 (NKVD) form a G4 region. A G5 region spans residues 177 to 179 (SAL).

This sequence belongs to the TRAFAC class translation factor GTPase superfamily. Classic translation factor GTPase family. EF-Tu/EF-1A subfamily. In terms of assembly, monomer.

It is found in the cytoplasm. The catalysed reaction is GTP + H2O = GDP + phosphate + H(+). In terms of biological role, GTP hydrolase that promotes the GTP-dependent binding of aminoacyl-tRNA to the A-site of ribosomes during protein biosynthesis. This Streptococcus pyogenes serotype M1 protein is Elongation factor Tu.